The chain runs to 455 residues: Cysteinylglycine-S-conjugate dipeptidase (455 aa).

Position 92 (H92) interacts with Zn(2+). D94 is a catalytic residue. D125 contacts Zn(2+). The Proton acceptor role is filled by E158. Residues E159, E163, and H428 each contribute to the Zn(2+) site.

Belongs to the peptidase M20F family. It depends on Zn(2+) as a cofactor.

The enzyme catalyses an S-substituted L-cysteinylglycine + H2O = an S-substituted L-cysteine + glycine. The catalysed reaction is S-(1-hydroxy-3-methylhexan-3-yl)-L-cysteinylglycine + H2O = S-(1-hydroxy-3-methylhexan-3-yl)-L-cysteine + glycine. It carries out the reaction S-benzyl-L-cysteinylglycine + H2O = S-benzyl-L-cysteine + glycine. Its function is as follows. Metallopeptidase that hydrolyzes the Cys-Gly bond of Cys-Gly-S-conjugates. Involved in the formation of the human body odorant 3-methyl-3-sulfanylhexan-1-ol (3M3SH) from odorless axilla secretions. Catalyzes the hydrolysis of the Cys-Gly bond of the Cys-Gly-S-conjugate of 3M3SH, a key precursor secreted by apocrine glands in human axilla skin. The Cys-S-conjugate obtained is then cleaved by the Cys-S-conjugate beta-lyase MetC, which finally releases 3M3SH. The polypeptide is Cysteinylglycine-S-conjugate dipeptidase (Corynebacterium striatum).